The following is a 281-amino-acid chain: Large ribosomal subunit protein uL2 (281 aa).

A disordered region spans residues Leu215–Lys281. Positions Lys258–Ile269 are enriched in basic and acidic residues. Over residues Val270–Lys281 the composition is skewed to basic residues.

It belongs to the universal ribosomal protein uL2 family. As to quaternary structure, part of the 50S ribosomal subunit. Forms a bridge to the 30S subunit in the 70S ribosome.

One of the primary rRNA binding proteins. Required for association of the 30S and 50S subunits to form the 70S ribosome, for tRNA binding and peptide bond formation. It has been suggested to have peptidyltransferase activity; this is somewhat controversial. Makes several contacts with the 16S rRNA in the 70S ribosome. The sequence is that of Large ribosomal subunit protein uL2 from Pelagibacter ubique (strain HTCC1062).